We begin with the raw amino-acid sequence, 224 residues long: GrpE protein homolog 2, mitochondrial (224 aa).

Residues 1–31 constitute a mitochondrion transit peptide; it reads MAARLLWAVRRRMQPLAAHAASEGRGWLHPF. The residue at position 141 (K141) is an N6-acetyllysine.

The protein belongs to the GrpE family. In terms of assembly, probable component of the PAM complex at least composed of a mitochondrial HSP70 protein, GRPEL1 or GRPEL2, TIMM44, TIMM16/PAM16 and TIMM14/DNAJC19.

The protein localises to the mitochondrion matrix. Its function is as follows. Essential component of the PAM complex, a complex required for the translocation of transit peptide-containing proteins from the inner membrane into the mitochondrial matrix in an ATP-dependent manner. Seems to control the nucleotide-dependent binding of mitochondrial HSP70 to substrate proteins. Stimulates ATPase activity of mt-HSP70. May also serve to modulate the interconversion of oligomeric (inactive) and monomeric (active) forms of mt-HSP70. This is GrpE protein homolog 2, mitochondrial (GRPEL2) from Bos taurus (Bovine).